A 963-amino-acid chain; its full sequence is Glycine dehydrogenase (decarboxylating) (963 aa).

Lys707 is modified (N6-(pyridoxal phosphate)lysine).

The protein belongs to the GcvP family. The glycine cleavage system is composed of four proteins: P, T, L and H. Pyridoxal 5'-phosphate is required as a cofactor.

It catalyses the reaction N(6)-[(R)-lipoyl]-L-lysyl-[glycine-cleavage complex H protein] + glycine + H(+) = N(6)-[(R)-S(8)-aminomethyldihydrolipoyl]-L-lysyl-[glycine-cleavage complex H protein] + CO2. The glycine cleavage system catalyzes the degradation of glycine. The P protein binds the alpha-amino group of glycine through its pyridoxal phosphate cofactor; CO(2) is released and the remaining methylamine moiety is then transferred to the lipoamide cofactor of the H protein. In Dechloromonas aromatica (strain RCB), this protein is Glycine dehydrogenase (decarboxylating).